Here is a 423-residue protein sequence, read N- to C-terminus: p-aminobenzoyl-glutamate hydrolase subunit A homolog (423 aa).

The protein belongs to the peptidase M20 family. The cofactor is Mn(2+).

Functionally, catalyzes the cleavage of p-aminobenzoyl-glutamate (PABA-GLU) to form p-aminobenzoate (PABA) and glutamate. The chain is p-aminobenzoyl-glutamate hydrolase subunit A homolog (abgA) from Haemophilus influenzae (strain ATCC 51907 / DSM 11121 / KW20 / Rd).